The chain runs to 316 residues: Ribonuclease Z (316 aa).

Zn(2+) is bound by residues histidine 61, histidine 63, aspartate 65, histidine 66, histidine 152, aspartate 220, and histidine 279. Aspartate 65 (proton acceptor) is an active-site residue.

Belongs to the RNase Z family. As to quaternary structure, homodimer. Requires Zn(2+) as cofactor.

It carries out the reaction Endonucleolytic cleavage of RNA, removing extra 3' nucleotides from tRNA precursor, generating 3' termini of tRNAs. A 3'-hydroxy group is left at the tRNA terminus and a 5'-phosphoryl group is left at the trailer molecule.. Its function is as follows. Zinc phosphodiesterase, which displays some tRNA 3'-processing endonuclease activity. Probably involved in tRNA maturation, by removing a 3'-trailer from precursor tRNA. The sequence is that of Ribonuclease Z from Clostridium perfringens (strain ATCC 13124 / DSM 756 / JCM 1290 / NCIMB 6125 / NCTC 8237 / Type A).